The chain runs to 240 residues: Endonuclease V (240 aa).

Mg(2+) is bound by residues Asp-46 and Asp-116.

The protein belongs to the endonuclease V family. The cofactor is Mg(2+).

The protein resides in the cytoplasm. It catalyses the reaction Endonucleolytic cleavage at apurinic or apyrimidinic sites to products with a 5'-phosphate.. Functionally, DNA repair enzyme involved in the repair of deaminated bases. Selectively cleaves double-stranded DNA at the second phosphodiester bond 3' to a deoxyinosine leaving behind the intact lesion on the nicked DNA. This is Endonuclease V from Rhodospirillum centenum (strain ATCC 51521 / SW).